A 694-amino-acid polypeptide reads, in one-letter code: Methionine--tRNA ligase (694 aa).

Positions 12–22 (PYANGPLHLGH) match the 'HIGH' region motif. Cys143, Cys146, Cys156, and Cys159 together coordinate Zn(2+). Residues 330 to 334 (KMSKS) carry the 'KMSKS' region motif. Lys333 provides a ligand contact to ATP. Residues 550 to 577 (LAAPATPATASKPAPAKADAKPAAAANP) are disordered. The segment covering 551 to 575 (AAPATPATASKPAPAKADAKPAAAA) has biased composition (low complexity). The tRNA-binding domain occupies 591–694 (DFAKLDLRIG…SGAQPGMPVR (104 aa)).

The protein belongs to the class-I aminoacyl-tRNA synthetase family. MetG type 1 subfamily. As to quaternary structure, homodimer. Requires Zn(2+) as cofactor.

It is found in the cytoplasm. It carries out the reaction tRNA(Met) + L-methionine + ATP = L-methionyl-tRNA(Met) + AMP + diphosphate. Its function is as follows. Is required not only for elongation of protein synthesis but also for the initiation of all mRNA translation through initiator tRNA(fMet) aminoacylation. The sequence is that of Methionine--tRNA ligase from Xanthomonas axonopodis pv. citri (strain 306).